An 856-amino-acid polypeptide reads, in one-letter code: Phosphatidylglycerol lysyltransferase (856 aa).

A run of 13 helical transmembrane segments spans residues 7–27 (ALSI…IYQS), 51–71 (LFML…YDYV), 88–108 (VSWI…AGVG), 128–148 (IAWL…FVAA), 161–181 (PWLW…LAVS), 208–228 (SVVE…AMGI), 235–255 (VFGV…PGGF), 280–300 (IVLY…FFAA), 342–362 (SLSL…SLPI), 375–395 (ALLL…ILPI), 420–440 (FLKG…VLLV), 459–479 (IFAV…AGFI), and 501–521 (HATI…TVVY).

It belongs to the LPG synthase family.

The protein resides in the cell membrane. The catalysed reaction is L-lysyl-tRNA(Lys) + a 1,2-diacyl-sn-glycero-3-phospho-(1'-sn-glycerol) = a 1,2-diacyl-sn-glycero-3-phospho-1'-(3'-O-L-lysyl)-sn-glycerol + tRNA(Lys). Functionally, catalyzes the transfer of a lysyl group from L-lysyl-tRNA(Lys) to membrane-bound phosphatidylglycerol (PG), which produces lysylphosphatidylglycerol (LPG), one of the components of the bacterial membrane with a positive net charge. LPG synthesis contributes to the resistance to cationic antimicrobial peptides (CAMPs) and likely protects B.subtilis against its own CAMPs and against those produced by competiting microorganisms (bacteriocins). In fact, the modification of anionic phosphatidylglycerol with positively charged L-lysine results in repulsion of the peptides. This chain is Phosphatidylglycerol lysyltransferase (mprF), found in Bacillus subtilis (strain 168).